Reading from the N-terminus, the 310-residue chain is Olfactory receptor 4C11 (310 aa).

The Extracellular segment spans residues 1–23 (MQQNNSVPEFILLGLTQDPLRQK). N-linked (GlcNAc...) asparagine glycosylation occurs at Asn-4. The chain crosses the membrane as a helical span at residues 24-47 (IVFVIFLIFYMGTVVGNMLIIVTI). Residues 48 to 55 (KSSRTLGS) lie on the Cytoplasmic side of the membrane. The helical transmembrane segment at 56 to 77 (PMYFFLFYLSFADSCFSTSTAP) threads the bilayer. Over 78–98 (RLIVDALSEKKIITYNECMTQ) the chain is Extracellular. Cys-95 and Cys-187 are disulfide-bonded. A helical transmembrane segment spans residues 99-118 (VFALHLFGCMEIFVLILMAV). At 119-137 (DRYVAICKPLRYPTIMSQQ) the chain is on the cytoplasmic side. The chain crosses the membrane as a helical span at residues 138–156 (VCIILIVLAWIGSLIHSTA). Residues 157–193 (QIILALRLPFCGPYLIDHYCCDLQPLLKLACMDTYMI) lie on the Extracellular side of the membrane. Residues 194 to 217 (NLLLVSNSGAICSSSFMILIISYI) traverse the membrane as a helical segment. Residues 218 to 233 (VILHSLRNHSAKGKKK) lie on the Cytoplasmic side of the membrane. The helical transmembrane segment at 234–256 (ALSACTSHIIVVILFFGPCIFIY) threads the bilayer. The Extracellular segment spans residues 257–267 (TRPPTTFPMDK). Residues 268-287 (MVAVFYTIGTPFLNPLIYTL) form a helical membrane-spanning segment. At 288–310 (RNAEVKNAMRKLWHGKIISENKG) the chain is on the cytoplasmic side.

The protein belongs to the G-protein coupled receptor 1 family.

It localises to the cell membrane. Functionally, odorant receptor. This chain is Olfactory receptor 4C11 (OR4C11), found in Homo sapiens (Human).